The chain runs to 485 residues: MKYIPSIGLEIHSELSTKSKIFCDCPVSFGGEPNTRCCPVCTGMPGTLPVLNKQAVEYTVIAGLALNCKINEFSKMDRKNYFYPDLPKAYQISQFDLPICKDGGLTINTPDGEKFIRIERIHLEEDAGKLLHDNYDRYSLADYNRCGVPLIEIVTKPDLSSAEEAKEFVEKVRLMLLYSGVSDCRMEEGSLRADVNVSIRPIGTDELGTRTEMKNINSIKAIARAIDYEINRQSELLNEGKKIIQETRRWDDSKGESKALRSKEDAHDYRYFPEPDIVPVTFKSEDIEKLRKSLPELPDKRFERYTKTYSVNQADANLLLTSVSLSDFFEAAAAESGNPKQAANFIVVEVLRRLKDSNMSPEDIPFDGKLLARLLRLMDSEKITPNNAKKVLSEMFETGKEPDTIVDERGYKIINDTAEVESMVKEIISSNEKAVGEYLEGKEKTFGYLMGQCSRALAGRGNPKVVQEILRSELNKLRDIDINVH.

Belongs to the GatB/GatE family. GatB subfamily. As to quaternary structure, heterotrimer of A, B and C subunits.

The catalysed reaction is L-glutamyl-tRNA(Gln) + L-glutamine + ATP + H2O = L-glutaminyl-tRNA(Gln) + L-glutamate + ADP + phosphate + H(+). It catalyses the reaction L-aspartyl-tRNA(Asn) + L-glutamine + ATP + H2O = L-asparaginyl-tRNA(Asn) + L-glutamate + ADP + phosphate + 2 H(+). In terms of biological role, allows the formation of correctly charged Asn-tRNA(Asn) or Gln-tRNA(Gln) through the transamidation of misacylated Asp-tRNA(Asn) or Glu-tRNA(Gln) in organisms which lack either or both of asparaginyl-tRNA or glutaminyl-tRNA synthetases. The reaction takes place in the presence of glutamine and ATP through an activated phospho-Asp-tRNA(Asn) or phospho-Glu-tRNA(Gln). This Ruminiclostridium cellulolyticum (strain ATCC 35319 / DSM 5812 / JCM 6584 / H10) (Clostridium cellulolyticum) protein is Aspartyl/glutamyl-tRNA(Asn/Gln) amidotransferase subunit B.